Here is a 389-residue protein sequence, read N- to C-terminus: Coproporphyrin III ferrochelatase (389 aa).

The Fe-coproporphyrin III site is built by serine 70 and tyrosine 139. Residue histidine 205 participates in Fe(2+) binding. A disordered region spans residues 207–229 (IPSTDAGKSGPSGRPDSGEPWGE). Glutamate 303 provides a ligand contact to Fe(2+).

It belongs to the ferrochelatase family.

It is found in the cytoplasm. The enzyme catalyses Fe-coproporphyrin III + 2 H(+) = coproporphyrin III + Fe(2+). It functions in the pathway porphyrin-containing compound metabolism; protoheme biosynthesis. In terms of biological role, involved in coproporphyrin-dependent heme b biosynthesis. Catalyzes the insertion of ferrous iron into coproporphyrin III to form Fe-coproporphyrin III. The sequence is that of Coproporphyrin III ferrochelatase from Leifsonia xyli subsp. xyli (strain CTCB07).